The primary structure comprises 896 residues: Protein translocase subunit SecA (896 aa).

ATP-binding positions include Gln-87, 105 to 109 (GEGKT), and Asp-507. Residues 853-879 (ESLSENDEASETQTFRRQEKKIGRNDP) are disordered. Residues 866–876 (TFRRQEKKIGR) are compositionally biased toward basic and acidic residues. Residues Cys-880, Cys-882, Cys-891, and His-892 each coordinate Zn(2+).

Belongs to the SecA family. In terms of assembly, monomer and homodimer. Part of the essential Sec protein translocation apparatus which comprises SecA, SecYEG and auxiliary proteins SecDF-YajC and YidC. Zn(2+) is required as a cofactor.

The protein localises to the cell inner membrane. Its subcellular location is the cytoplasm. The enzyme catalyses ATP + H2O + cellular proteinSide 1 = ADP + phosphate + cellular proteinSide 2.. In terms of biological role, part of the Sec protein translocase complex. Interacts with the SecYEG preprotein conducting channel. Has a central role in coupling the hydrolysis of ATP to the transfer of proteins into and across the cell membrane, serving both as a receptor for the preprotein-SecB complex and as an ATP-driven molecular motor driving the stepwise translocation of polypeptide chains across the membrane. This chain is Protein translocase subunit SecA, found in Legionella pneumophila subsp. pneumophila (strain Philadelphia 1 / ATCC 33152 / DSM 7513).